Here is a 305-residue protein sequence, read N- to C-terminus: Glutaminase 2 (305 aa).

7 residues coordinate substrate: Ser-61, Asn-113, Glu-158, Asn-165, Tyr-189, Tyr-241, and Val-259.

This sequence belongs to the glutaminase family. As to quaternary structure, homotetramer.

The enzyme catalyses L-glutamine + H2O = L-glutamate + NH4(+). This chain is Glutaminase 2, found in Clostridium perfringens (strain 13 / Type A).